The chain runs to 122 residues: Large ribosomal subunit protein uL14 (122 aa).

The protein belongs to the universal ribosomal protein uL14 family. In terms of assembly, part of the 50S ribosomal subunit. Forms a cluster with proteins L3 and L19. In the 70S ribosome, L14 and L19 interact and together make contacts with the 16S rRNA in bridges B5 and B8.

Binds to 23S rRNA. Forms part of two intersubunit bridges in the 70S ribosome. The protein is Large ribosomal subunit protein uL14 of Parvibaculum lavamentivorans (strain DS-1 / DSM 13023 / NCIMB 13966).